The sequence spans 853 residues: DNA mismatch repair protein MutS (853 aa).

614-621 provides a ligand contact to ATP; that stretch reads GPNMGGKS.

It belongs to the DNA mismatch repair MutS family.

In terms of biological role, this protein is involved in the repair of mismatches in DNA. It is possible that it carries out the mismatch recognition step. This protein has a weak ATPase activity. In Escherichia coli O157:H7 (strain EC4115 / EHEC), this protein is DNA mismatch repair protein MutS.